The sequence spans 248 residues: MELTWHGHSTWHVVVDDTELLIDPYFDNPKTDVDPEELDPDYLLLTHGHSDHIGDVDRYEGATVVATPELTGYIQENFGHENAVGGMGMNIGGTVECGDAWVTMVRADHSNGIDTGYGTSAGMPAGFVIGDKKPTQESDPDCTTFYHAGDTGLMSEMVDVIAPYLEPDAAALPTGDHFTMGPAGAGIAADWVGADVVFPMHYDTFQPIEIDTREFVNEVKAAGAAAEPVVLEGDETYVLENEFGSDGD.

Belongs to the UPF0173 family.

The chain is UPF0173 metal-dependent hydrolase Hlac_1347 from Halorubrum lacusprofundi (strain ATCC 49239 / DSM 5036 / JCM 8891 / ACAM 34).